A 428-amino-acid polypeptide reads, in one-letter code: Palmitoyltransferase pfa4 (428 aa).

The Cytoplasmic segment spans residues 1 to 10 (MLCRSFNISQ). Residues 11-31 (LAIPFVSVLISFLAYTSQLFF) traverse the membrane as a helical segment. Residues 32–43 (YYFEEAPLRSEE) lie on the Lumenal side of the membrane. Residues 44 to 61 (FWRLNIFAVCIWVCYYRA) form a helical membrane-spanning segment. Residues 62–134 (CTVDPGRIPK…SNCVSHFTYP (73 aa)) are Cytoplasmic-facing. The 51-residue stretch at 91-141 (RWCRRCEAFKPPRAHHCKTCQRCIPKMDHHCPWTSNCVSHFTYPHFMRFLF) folds into the DHHC domain. Cysteine 121 functions as the S-palmitoyl cysteine intermediate in the catalytic mechanism. A helical membrane pass occupies residues 135 to 155 (HFMRFLFYAVVGMGYLETLLF). Residues 156 to 177 (ERASIVWASRHLPSYLGPGLGQ) are Lumenal-facing. A helical membrane pass occupies residues 178 to 198 (LVHLFILLVVNSLTWLALFIL). Residues 199–428 (LLRSIWSLAL…GILMQRRRQQ (230 aa)) lie on the Cytoplasmic side of the membrane. The segment at 339–400 (QRSNDASHSG…WKNSEGDRLR (62 aa)) is disordered. The span at 360–373 (DRFNENKAKERLSE) shows a compositional bias: basic and acidic residues. Positions 374–388 (SESDFSDDEEVQDGE) are enriched in acidic residues. Residues 389–400 (EGWKNSEGDRLR) show a composition bias toward basic and acidic residues.

It belongs to the DHHC palmitoyltransferase family. PFA4 subfamily.

The protein localises to the endoplasmic reticulum membrane. It catalyses the reaction L-cysteinyl-[protein] + hexadecanoyl-CoA = S-hexadecanoyl-L-cysteinyl-[protein] + CoA. Its function is as follows. Mediates the reversible addition of palmitate to target proteins, thereby regulating their membrane association and biological function. The polypeptide is Palmitoyltransferase pfa4 (Aspergillus fumigatus (strain ATCC MYA-4609 / CBS 101355 / FGSC A1100 / Af293) (Neosartorya fumigata)).